We begin with the raw amino-acid sequence, 147 residues long: Cyanate hydratase (147 aa).

Residues arginine 88, glutamate 91, and serine 114 contribute to the active site.

It belongs to the cyanase family.

The catalysed reaction is cyanate + hydrogencarbonate + 3 H(+) = NH4(+) + 2 CO2. In terms of biological role, catalyzes the reaction of cyanate with bicarbonate to produce ammonia and carbon dioxide. The sequence is that of Cyanate hydratase from Thiobacillus denitrificans (strain ATCC 25259 / T1).